Consider the following 232-residue polypeptide: Zinc-finger homeodomain protein 5 (232 aa).

The span at 1-11 shows a compositional bias: acidic residues; that stretch reads MELSEHEEDAG. Residues 1 to 25 form a disordered region; sequence MELSEHEEDAGDVGGGCSSPPTPPH. The ZF-HD dimerization-type; degenerate zinc-finger motif lies at 40–86; the sequence is YHECLRNHAAASGGHVVDGCGEFMPASTEEPLACAACGCHRSFHRRD. A disordered region spans residues 126–170; that stretch reads GLPFPGYGTPSGGTGTTTASSSDERLRPSPVQPRRRSRTTFTREQ. Positions 159–222 form a DNA-binding region, homeobox; that stretch reads RRRSRTTFTR…NNKHSFKQKQ (64 aa).

Homo- and heterodimer with other ZFHD proteins.

The protein localises to the nucleus. Functionally, putative transcription factor. This Oryza sativa subsp. japonica (Rice) protein is Zinc-finger homeodomain protein 5 (ZHD5).